Consider the following 327-residue polypeptide: Methionyl-tRNA formyltransferase (327 aa).

121 to 124 lines the (6S)-5,6,7,8-tetrahydrofolate pocket; it reads SLLP.

This sequence belongs to the Fmt family.

The catalysed reaction is L-methionyl-tRNA(fMet) + (6R)-10-formyltetrahydrofolate = N-formyl-L-methionyl-tRNA(fMet) + (6S)-5,6,7,8-tetrahydrofolate + H(+). Functionally, attaches a formyl group to the free amino group of methionyl-tRNA(fMet). The formyl group appears to play a dual role in the initiator identity of N-formylmethionyl-tRNA by promoting its recognition by IF2 and preventing the misappropriation of this tRNA by the elongation apparatus. The polypeptide is Methionyl-tRNA formyltransferase (Burkholderia pseudomallei (strain 1710b)).